Consider the following 409-residue polypeptide: Rho-GTPase-activating protein BAG7 (409 aa).

Residues Met-1–Ser-26 show a composition bias toward polar residues. A disordered region spans residues Met-1–Asp-32. Positions Val-50 to Ile-257 constitute a Rho-GAP domain. Residues Lys-362–Pro-409 form a disordered region. Over residues Asp-377 to Glu-386 the composition is skewed to basic and acidic residues.

In terms of assembly, interacts with RHO1.

Functionally, acts in signal transduction. Activates RHO1. This is Rho-GTPase-activating protein BAG7 (BAG7) from Saccharomyces cerevisiae (strain ATCC 204508 / S288c) (Baker's yeast).